The following is a 120-amino-acid chain: Large ribosomal subunit protein bL20 (120 aa).

Belongs to the bacterial ribosomal protein bL20 family.

In terms of biological role, binds directly to 23S ribosomal RNA and is necessary for the in vitro assembly process of the 50S ribosomal subunit. It is not involved in the protein synthesizing functions of that subunit. This is Large ribosomal subunit protein bL20 from Cereibacter sphaeroides (strain ATCC 17029 / ATH 2.4.9) (Rhodobacter sphaeroides).